A 273-amino-acid chain; its full sequence is Ciliary microtubule inner protein 2B (273 aa).

Disordered stretches follow at residues 59–85 (TLLPPIQSPRSPVISKGRLPPRRGHER) and 123–164 (RHGE…HASP). Residues 123-159 (RHGEQESHQLPDGAKGEREVEEDQLREAEEPPLKQEL) show a composition bias toward basic and acidic residues.

The protein belongs to the CIMIP2 family. In terms of assembly, microtubule inner protein component of sperm flagellar doublet microtubules. Expressed in airway epithelial cells.

Its subcellular location is the cytoplasm. It localises to the cytoskeleton. It is found in the cilium axoneme. The protein localises to the flagellum axoneme. Functionally, microtubule inner protein (MIP) part of the dynein-decorated doublet microtubules (DMTs) in cilia axoneme, which is required for motile cilia beating. The chain is Ciliary microtubule inner protein 2B (Cimip2b) from Mus musculus (Mouse).